Here is a 471-residue protein sequence, read N- to C-terminus: tRNA-2-methylthio-N(6)-dimethylallyladenosine synthase (471 aa).

An MTTase N-terminal domain is found at 36 to 154; the sequence is KTYHIITYGC…FPQLLYKAIT (119 aa). 6 residues coordinate [4Fe-4S] cluster: C45, C81, C115, C191, C195, and C198. Positions 177–407 constitute a Radical SAM core domain; it reads RREGVSAFVN…VKLVEEIALK (231 aa). One can recognise a TRAM domain in the interval 410 to 471; it reads QQMLGKVCEI…SRHWLYGEVI (62 aa).

The protein belongs to the methylthiotransferase family. MiaB subfamily. Monomer. [4Fe-4S] cluster serves as cofactor.

Its subcellular location is the cytoplasm. It carries out the reaction N(6)-dimethylallyladenosine(37) in tRNA + (sulfur carrier)-SH + AH2 + 2 S-adenosyl-L-methionine = 2-methylsulfanyl-N(6)-dimethylallyladenosine(37) in tRNA + (sulfur carrier)-H + 5'-deoxyadenosine + L-methionine + A + S-adenosyl-L-homocysteine + 2 H(+). Its function is as follows. Catalyzes the methylthiolation of N6-(dimethylallyl)adenosine (i(6)A), leading to the formation of 2-methylthio-N6-(dimethylallyl)adenosine (ms(2)i(6)A) at position 37 in tRNAs that read codons beginning with uridine. This chain is tRNA-2-methylthio-N(6)-dimethylallyladenosine synthase, found in Caldicellulosiruptor saccharolyticus (strain ATCC 43494 / DSM 8903 / Tp8T 6331).